Consider the following 449-residue polypeptide: Exodeoxyribonuclease 7 large subunit (449 aa).

The protein belongs to the XseA family. As to quaternary structure, heterooligomer composed of large and small subunits.

It localises to the cytoplasm. It catalyses the reaction Exonucleolytic cleavage in either 5'- to 3'- or 3'- to 5'-direction to yield nucleoside 5'-phosphates.. Functionally, bidirectionally degrades single-stranded DNA into large acid-insoluble oligonucleotides, which are then degraded further into small acid-soluble oligonucleotides. In Salmonella schwarzengrund (strain CVM19633), this protein is Exodeoxyribonuclease 7 large subunit.